We begin with the raw amino-acid sequence, 81 residues long: Small ribosomal subunit protein bS16 (81 aa).

It belongs to the bacterial ribosomal protein bS16 family.

The protein is Small ribosomal subunit protein bS16 of Acetivibrio thermocellus (strain ATCC 27405 / DSM 1237 / JCM 9322 / NBRC 103400 / NCIMB 10682 / NRRL B-4536 / VPI 7372) (Clostridium thermocellum).